Consider the following 209-residue polypeptide: Protein lin-28 homolog A (209 aa).

The disordered stretch occupies residues 1 to 31 (MGSVSNQQFAGGCAKAAEEAPEEAPEDAARA). At glycine 2 the chain carries N-acetylglycine. Serine 3 carries the phosphoserine modification. The 74-residue stretch at 39 to 112 (HGAGICKWFN…GLESIRVTGP (74 aa)) folds into the CSD domain. The tract at residues 113–136 (GGVFCIGSERRPKGKSMQKRRSKG) is flexible linker. Serine 120 is modified (phosphoserine). CCHC-type zinc fingers lie at residues 137–154 (DRCY…ECKL) and 159–176 (KKCH…SCPL). The disordered stretch occupies residues 178-209 (AQQGPSAQGKPTYFREEEEEIHSPTLLPEAQN). Serine 200 carries the phosphoserine modification.

This sequence belongs to the lin-28 family. In terms of assembly, monomer. During skeletal muscle differentiation, associated with translation initiation complexes in the polysomal compartment. Directly interacts with EIF3S2. Interacts with NCL in an RNA-dependent manner. Interacts (via C-terminus) with DHX9 (via N- and C-terminus); this interaction occurs in a RNA-independent manner. Interacts with TUT4 in the presence of pre-let-7 RNA. As to expression, expressed in embryonic stem cells, placenta and testis. Tends to be up-regulated in HER2-overexpressing breast tumors.

It is found in the cytoplasm. Its subcellular location is the rough endoplasmic reticulum. The protein localises to the P-body. The protein resides in the stress granule. It localises to the nucleus. It is found in the nucleolus. RNA-binding protein that inhibits processing of pre-let-7 miRNAs and regulates translation of mRNAs that control developmental timing, pluripotency and metabolism. Seems to recognize a common structural G-quartet (G4) feature in its miRNA and mRNA targets. 'Translational enhancer' that drives specific mRNAs to polysomes and increases the efficiency of protein synthesis. Its association with the translational machinery and target mRNAs results in an increased number of initiation events per molecule of mRNA and, indirectly, in mRNA stabilization. Binds IGF2 mRNA, MYOD1 mRNA, ARBP/36B4 ribosomal protein mRNA and its own mRNA. Essential for skeletal muscle differentiation program through the translational up-regulation of IGF2 expression. Suppressor of microRNA (miRNA) biogenesis, including that of let-7, miR107, miR-143 and miR-200c. Specifically binds the miRNA precursors (pre-miRNAs), recognizing an 5'-GGAG-3' motif found in pre-miRNA terminal loop, and recruits TUT4 and TUT7 uridylyltransferases. This results in the terminal uridylation of target pre-miRNAs. Uridylated pre-miRNAs fail to be processed by Dicer and undergo degradation. The repression of let-7 expression is required for normal development and contributes to maintain the pluripotent state by preventing let-7-mediated differentiation of embryonic stem cells. Localized to the periendoplasmic reticulum area, binds to a large number of spliced mRNAs and inhibits the translation of mRNAs destined for the ER, reducing the synthesis of transmembrane proteins, ER or Golgi lumen proteins, and secretory proteins. Binds to and enhances the translation of mRNAs for several metabolic enzymes, such as PFKP, PDHA1 or SDHA, increasing glycolysis and oxidative phosphorylation. Which, with the let-7 repression may enhance tissue repair in adult tissue. The chain is Protein lin-28 homolog A (LIN28A) from Homo sapiens (Human).